A 1015-amino-acid chain; its full sequence is Formate dehydrogenase, nitrate-inducible, major subunit (1015 aa).

A signal peptide (tat-type signal) is located at residues 1-33 (MDVSRRQFFKICAGGMAGTTVAALGFAPKQALA). Residues 43–106 (AKEIRNTCTY…GLLDYVNSEN (64 aa)) enclose the 4Fe-4S Mo/W bis-MGD-type domain. 4 residues coordinate [4Fe-4S] cluster: cysteine 50, cysteine 53, cysteine 57, and cysteine 92. Selenocysteine 196 serves as a coordination point for Mo-bis(molybdopterin guanine dinucleotide). Residue selenocysteine 196 is a non-standard amino acid, selenocysteine.

This sequence belongs to the prokaryotic molybdopterin-containing oxidoreductase family. In terms of assembly, trimer of heterotrimers, consisting of subunits alpha, beta and gamma. It depends on Mo-bis(molybdopterin guanine dinucleotide) as a cofactor. [4Fe-4S] cluster serves as cofactor. Post-translationally, exported by the Tat system. The position of the signal peptide cleavage has not been experimentally proven.

The protein resides in the periplasm. It catalyses the reaction a quinone + formate + H(+) = a quinol + CO2. In terms of biological role, formate dehydrogenase allows E.coli to use formate as major electron donor during anaerobic respiration, when nitrate is used as electron acceptor. The alpha subunit FdnG contains the formate oxidation site. Electrons are transferred from formate to menaquinone in the gamma subunit (FdnI), through the 4Fe-4S clusters in the beta subunit (FdnH). Formate dehydrogenase-N is part of a system that generates proton motive force, together with the dissimilatory nitrate reductase (Nar). The polypeptide is Formate dehydrogenase, nitrate-inducible, major subunit (fdnG) (Escherichia coli (strain K12)).